A 603-amino-acid polypeptide reads, in one-letter code: Phosphoribosylformylglycinamidine synthase subunit PurL (603 aa).

The active site involves histidine 32. Residues tyrosine 35 and lysine 68 each contribute to the ATP site. Glutamate 70 lines the Mg(2+) pocket. Substrate contacts are provided by residues 71 to 74 (SHNH) and arginine 93. Histidine 72 functions as the Proton acceptor in the catalytic mechanism. Aspartate 94 lines the Mg(2+) pocket. ATP-binding positions include aspartate 107 and 136-139 (GELR). Substrate is bound by residues glycine 189 and glutamine 208. Mg(2+) is bound at residue aspartate 236. 280–282 (ESQ) serves as a coordination point for substrate. Residues glycine 388, lysine 429, asparagine 442, and glycine 477 each contribute to the ATP site. Residue asparagine 478 participates in Mg(2+) binding. Serine 480 is a substrate binding site. Serine 549 and histidine 556 together coordinate ATP.

The protein belongs to the FGAMS family. Monomer. Part of the FGAM synthase complex composed of 1 PurL, 1 PurQ and 2 PurS subunits.

It is found in the cytoplasm. It catalyses the reaction N(2)-formyl-N(1)-(5-phospho-beta-D-ribosyl)glycinamide + L-glutamine + ATP + H2O = 2-formamido-N(1)-(5-O-phospho-beta-D-ribosyl)acetamidine + L-glutamate + ADP + phosphate + H(+). It functions in the pathway purine metabolism; IMP biosynthesis via de novo pathway; 5-amino-1-(5-phospho-D-ribosyl)imidazole from N(2)-formyl-N(1)-(5-phospho-D-ribosyl)glycinamide: step 1/2. In terms of biological role, part of the phosphoribosylformylglycinamidine synthase complex involved in the purines biosynthetic pathway. Catalyzes the ATP-dependent conversion of formylglycinamide ribonucleotide (FGAR) and glutamine to yield formylglycinamidine ribonucleotide (FGAM) and glutamate. The FGAM synthase complex is composed of three subunits. PurQ produces an ammonia molecule by converting glutamine to glutamate. PurL transfers the ammonia molecule to FGAR to form FGAM in an ATP-dependent manner. PurS interacts with PurQ and PurL and is thought to assist in the transfer of the ammonia molecule from PurQ to PurL. The polypeptide is Phosphoribosylformylglycinamidine synthase subunit PurL (Thermotoga maritima (strain ATCC 43589 / DSM 3109 / JCM 10099 / NBRC 100826 / MSB8)).